The primary structure comprises 209 residues: MRAAAISTPKLDKMPGMFFSANPKELKGTTHSLLDDKMQKRRPKTFGMDMKAYLRSMIPHLESGMKSSKSKDVLSAAEVMQWSQSLEKLLANQTGQNVFGSFLKSEFSEENIEFWLACEDYKKTESDLLPCKAEEIYKAFVHSDAAKQINIDFRTRESTAKKIKAPTPTCFDEAQKVIYTLMEKDSYPRFLKSDIYLNLLNDLQANSLK.

Positions Ser85–Leu200 constitute an RGS domain.

Interacts with GNAI1 and GNAQ. As to expression, detected in peripheral blood monocytes. Expression is relatively low in B-cells and chronic lymphocytic leukemia B-cells; however, in other types of malignant B-cell such as non-Hodgkin lymphoma and hairy cell leukemia, expression is constitutively high.

Its subcellular location is the cell membrane. The protein resides in the cytoplasm. The protein localises to the cytosol. In terms of biological role, regulates G protein-coupled receptor signaling cascades, including signaling downstream of the N-formylpeptide chemoattractant receptors and leukotriene receptors. Inhibits B cell chemotaxis toward CXCL12. Inhibits signal transduction by increasing the GTPase activity of G protein alpha subunits thereby driving them into their inactive GDP-bound form. In Homo sapiens (Human), this protein is Regulator of G-protein signaling 1 (RGS1).